The chain runs to 380 residues: MGIQGLAKLIADVAPSAIRENDIKSYFGRKVAIDASMSIYQFLIAVRQGGDVLQNEEGETTSHLMGMFYRTIRMMENGIKPVYVFDGKPPQLKSGELAKRSERRAEAEKQLQQAQAAGAEQEVEKFTKRLVKVTKQHNDECKHLLSLMGIPYLDAPSEAEASCAALVKAGKVYAAATEDMDCLTFGSPVLMRHLTASEAKKLPIQEFHLSRILQELGLNQEQFVDLCILLGSDYCESIRGIGPKRAVDLIQKHKSIEEIVRRLDPNKYPVPENWLHKEAHQLFLEPEVLDPESVELKWSEPNEEELIKFMCGEKQFSEERIRSGVKRLSKSRQGSTQGRLDDFFKVTGSLSSAKRKEPEPKGSTKKKAKTGAAGKFKRGK.

The interval 1–104 is N-domain; the sequence is MGIQGLAKLI…GELAKRSERR (104 aa). At arginine 19 the chain carries Symmetric dimethylarginine; by PRMT5. Aspartate 34 lines the Mg(2+) pocket. Arginine 47 and arginine 70 together coordinate DNA. At lysine 80 the chain carries N6-acetyllysine. Position 86 (aspartate 86) interacts with Mg(2+). Residues arginine 100 and arginine 104 each carry the symmetric dimethylarginine; by PRMT5 modification. An I-domain region spans residues 122-253; sequence EVEKFTKRLV…KRAVDLIQKH (132 aa). Positions 158, 160, 179, and 181 each coordinate Mg(2+). Glutamate 158 lines the DNA pocket. Phosphoserine; by CDK2 is present on serine 187. Symmetric dimethylarginine; by PRMT5 is present on arginine 192. The residue at position 197 (serine 197) is a Phosphoserine. The DNA site is built by glycine 231 and aspartate 233. Aspartate 233 contributes to the Mg(2+) binding site. Phosphoserine occurs at positions 255, 293, and 335. The interval 327 to 380 is disordered; the sequence is RLSKSRQGSTQGRLDDFFKVTGSLSSAKRKEPEPKGSTKKKAKTGAAGKFKRGK. Threonine 336 is subject to Phosphothreonine. The tract at residues 336–344 is interaction with PCNA; that stretch reads TQGRLDDFF. The residue at position 354 (lysine 354) is an N6-acetyllysine. The segment covering 363 to 380 has biased composition (basic residues); sequence STKKKAKTGAAGKFKRGK. Threonine 364 carries the phosphothreonine modification. 3 positions are modified to N6-acetyllysine: lysine 375, lysine 377, and lysine 380.

The protein belongs to the XPG/RAD2 endonuclease family. FEN1 subfamily. As to quaternary structure, interacts with PCNA. Three molecules of FEN1 bind to one PCNA trimer with each molecule binding to one PCNA monomer. PCNA stimulates the nuclease activity without altering cleavage specificity. The C-terminal domain binds EP300; can bind simultaneously to both PCNA and EP300. Interacts with DDX11; this interaction is direct and increases flap endonuclease activity of FEN1. Interacts with WDR4; regulating its endonuclease activity. Interacts with POLB. Requires Mg(2+) as cofactor. Acetylated by EP300. Acetylation inhibits both endonuclease and exonuclease activity. Acetylation also reduces DNA-binding activity but does not affect interaction with PCNA or EP300. Post-translationally, phosphorylation upon DNA damage induces relocalization to the nuclear plasma. Phosphorylation at Ser-187 by CDK2 occurs during late S-phase and results in dissociation from PCNA. In terms of processing, methylation at Arg-192 by PRMT5 impedes Ser-187 phosphorylation and increases interaction with PCNA.

The protein resides in the nucleus. Its subcellular location is the nucleolus. It localises to the nucleoplasm. The protein localises to the mitochondrion. Structure-specific nuclease with 5'-flap endonuclease and 5'-3' exonuclease activities involved in DNA replication and repair. During DNA replication, cleaves the 5'-overhanging flap structure that is generated by displacement synthesis when DNA polymerase encounters the 5'-end of a downstream Okazaki fragment. It enters the flap from the 5'-end and then tracks to cleave the flap base, leaving a nick for ligation. Also involved in the long patch base excision repair (LP-BER) pathway, by cleaving within the apurinic/apyrimidinic (AP) site-terminated flap. Acts as a genome stabilization factor that prevents flaps from equilibrating into structures that lead to duplications and deletions. Also possesses 5'-3' exonuclease activity on nicked or gapped double-stranded DNA, and exhibits RNase H activity. Also involved in replication and repair of rDNA and in repairing mitochondrial DNA. The sequence is that of Flap endonuclease 1 from Homo sapiens (Human).